A 375-amino-acid chain; its full sequence is D-apiose dehydrogenase (375 aa).

An NAD(+)-binding site is contributed by 29–30 (FF). Mg(2+) is bound by residues tryptophan 38, arginine 39, isoleucine 41, and alanine 44. NAD(+) contacts are provided by residues aspartate 51, serine 93, 111–112 (QK), asparagine 140, and 179–181 (QPY). Residue lysine 112 participates in substrate binding. 4 residues coordinate substrate: glutamine 179, aspartate 192, histidine 196, and tyrosine 246.

The protein belongs to the Gfo/Idh/MocA family.

It carries out the reaction D-apiofuranose + NAD(+) = D-apionolactone + NADH + H(+). Its pathway is carbohydrate metabolism. In terms of biological role, involved in catabolism of D-apiose. Catalyzes oxidation of D-apiose to D-apionolactone. This is D-apiose dehydrogenase from Paraburkholderia graminis (strain ATCC 700544 / DSM 17151 / LMG 18924 / NCIMB 13744 / C4D1M).